We begin with the raw amino-acid sequence, 85 residues long: Cytochrome c6 (85 aa).

Residues Cys14, Cys17, His18, and Met58 each coordinate heme c.

The protein belongs to the cytochrome c family. PetJ subfamily. Monomer. In terms of processing, binds 1 heme c group covalently per subunit.

The protein resides in the plastid. It is found in the chloroplast thylakoid lumen. In terms of biological role, functions as an electron carrier between membrane-bound cytochrome b6-f and photosystem I in oxygenic photosynthesis. The polypeptide is Cytochrome c6 (petJ) (Pyropia tenera (Nori)).